We begin with the raw amino-acid sequence, 520 residues long: MPDAMSAGAILRALLPEMLLSGGAMLLLLASVWTPQGNQPGAAEGAERTSVLARFGVILCLVVGLAVVIAWGDGAAGTPDGRVAGDGFRWAVDLVILLGTALALMLLEAEHQRSAAFGPEVPSLMLLASTGMMVLAGARDLMFVFLGVELMSLAVYVLAGVNRRSARSAEAAVKYFLLGAISSGFLLYGMALLFGATGSTRLQDITEWAAAQATLSPLFMSGVALLLVGLAFKVAAAPFHLWTPDVYDGAPLPVTAFMSATVKTAAFAVFARIMIEGLAVAAPRWHMGLWWLAAVTMVVGNVFALSQRNLVRMLAYSSIAHAGYLLVSIIVGDAAGTSALIFYVVSYTLATMGAFGVLITINGGRDRAPTLDDIAGLWLVRPWLAIAMTVFLLAFMGMPVLGGMGFFAKWYILQAALQAPAPQTILAVVLVIASAVSAAYYLAVVSAMFMRPRPEGQPVPSTTPLNQSLIATAAVALLVFGLYPTPIMELARRATTTTSPTSNPAAPRGEVRLQTASVPR.

Transmembrane regions (helical) follow at residues 13-33 (ALLP…ASVW), 55-75 (FGVI…GDGA), 87-107 (GFRW…LMLL), 115-135 (AAFG…MMVL), 141-161 (LMFV…LAGV), 176-196 (FLLG…LFGA), 219-239 (FMSG…AAPF), 250-270 (APLP…FAVF), 285-305 (WHMG…VFAL), 313-333 (MLAY…IVGD), 339-359 (ALIF…GVLI), 383-403 (WLAI…VLGG), 425-445 (ILAV…LAVV), and 468-488 (SLIA…TPIM). Residues 494–508 (ATTTTSPTSNPAAPR) are compositionally biased toward low complexity. Residues 494 to 520 (ATTTTSPTSNPAAPRGEVRLQTASVPR) form a disordered region.

This sequence belongs to the complex I subunit 2 family. NDH-1 is composed of 14 different subunits. Subunits NuoA, H, J, K, L, M, N constitute the membrane sector of the complex.

Its subcellular location is the cell inner membrane. It carries out the reaction a quinone + NADH + 5 H(+)(in) = a quinol + NAD(+) + 4 H(+)(out). NDH-1 shuttles electrons from NADH, via FMN and iron-sulfur (Fe-S) centers, to quinones in the respiratory chain. The immediate electron acceptor for the enzyme in this species is believed to be ubiquinone. Couples the redox reaction to proton translocation (for every two electrons transferred, four hydrogen ions are translocated across the cytoplasmic membrane), and thus conserves the redox energy in a proton gradient. The sequence is that of NADH-quinone oxidoreductase subunit N from Gemmatimonas aurantiaca (strain DSM 14586 / JCM 11422 / NBRC 100505 / T-27).